The sequence spans 453 residues: Bifunctional protein GlmU (453 aa).

A pyrophosphorylase region spans residues 1–225; that stretch reads MNIVILAAGT…EWETLGVNSK (225 aa). UDP-N-acetyl-alpha-D-glucosamine is bound by residues 6-9, Lys-20, Gln-71, 76-77, 98-100, Gly-135, Glu-150, Asn-165, and Asn-223; these read LAAG, GT, and YGD. Residue Asp-100 coordinates Mg(2+). A Mg(2+)-binding site is contributed by Asn-223. The segment at 226-246 is linker; the sequence is AQLAELERIHQRNVADALLVD. Residues 247–453 are N-acetyltransferase; that stretch reads GVTLADPARV…GYVRPVKKKS (207 aa). UDP-N-acetyl-alpha-D-glucosamine contacts are provided by Arg-329 and Lys-347. The Proton acceptor role is filled by His-359. The UDP-N-acetyl-alpha-D-glucosamine site is built by Tyr-362 and Asn-373. Acetyl-CoA is bound by residues Ala-376, 382–383, Ser-401, and Ala-419; that span reads NY.

The protein in the N-terminal section; belongs to the N-acetylglucosamine-1-phosphate uridyltransferase family. It in the C-terminal section; belongs to the transferase hexapeptide repeat family. In terms of assembly, homotrimer. Mg(2+) serves as cofactor.

The protein localises to the cytoplasm. The enzyme catalyses alpha-D-glucosamine 1-phosphate + acetyl-CoA = N-acetyl-alpha-D-glucosamine 1-phosphate + CoA + H(+). It catalyses the reaction N-acetyl-alpha-D-glucosamine 1-phosphate + UTP + H(+) = UDP-N-acetyl-alpha-D-glucosamine + diphosphate. It functions in the pathway nucleotide-sugar biosynthesis; UDP-N-acetyl-alpha-D-glucosamine biosynthesis; N-acetyl-alpha-D-glucosamine 1-phosphate from alpha-D-glucosamine 6-phosphate (route II): step 2/2. The protein operates within nucleotide-sugar biosynthesis; UDP-N-acetyl-alpha-D-glucosamine biosynthesis; UDP-N-acetyl-alpha-D-glucosamine from N-acetyl-alpha-D-glucosamine 1-phosphate: step 1/1. Its pathway is bacterial outer membrane biogenesis; LPS lipid A biosynthesis. Functionally, catalyzes the last two sequential reactions in the de novo biosynthetic pathway for UDP-N-acetylglucosamine (UDP-GlcNAc). The C-terminal domain catalyzes the transfer of acetyl group from acetyl coenzyme A to glucosamine-1-phosphate (GlcN-1-P) to produce N-acetylglucosamine-1-phosphate (GlcNAc-1-P), which is converted into UDP-GlcNAc by the transfer of uridine 5-monophosphate (from uridine 5-triphosphate), a reaction catalyzed by the N-terminal domain. This Burkholderia orbicola (strain MC0-3) protein is Bifunctional protein GlmU.